Reading from the N-terminus, the 291-residue chain is N-acetylmannosamine kinase (291 aa).

ATP-binding positions include 5–12 (AIDIGGTK) and 132–139 (GVGGGVVS). Zn(2+)-binding residues include H156, C166, C168, and C173.

Belongs to the ROK (NagC/XylR) family. NanK subfamily. In terms of assembly, homodimer.

The enzyme catalyses an N-acyl-D-mannosamine + ATP = an N-acyl-D-mannosamine 6-phosphate + ADP + H(+). Its pathway is amino-sugar metabolism; N-acetylneuraminate degradation; D-fructose 6-phosphate from N-acetylneuraminate: step 2/5. Its function is as follows. Catalyzes the phosphorylation of N-acetylmannosamine (ManNAc) to ManNAc-6-P. This is N-acetylmannosamine kinase from Escherichia coli (strain ATCC 8739 / DSM 1576 / NBRC 3972 / NCIMB 8545 / WDCM 00012 / Crooks).